The sequence spans 336 residues: GTPase Obg (336 aa).

The Obg domain occupies 1–159; the sequence is MKFVDEATLI…KTLKLELKLL (159 aa). The OBG-type G domain maps to 160 to 329; the sequence is ADVGLVGLPN…LIEAIFAQLR (170 aa). GTP is bound by residues 166–173, 191–195, 213–216, 283–286, and 310–312; these read GLPNAGKS, FTTLA, DIPG, NKMD, and SAI. Residues Ser-173 and Thr-193 each coordinate Mg(2+).

Belongs to the TRAFAC class OBG-HflX-like GTPase superfamily. OBG GTPase family. Monomer. Mg(2+) serves as cofactor.

Its subcellular location is the cytoplasm. An essential GTPase which binds GTP, GDP and possibly (p)ppGpp with moderate affinity, with high nucleotide exchange rates and a fairly low GTP hydrolysis rate. Plays a role in control of the cell cycle, stress response, ribosome biogenesis and in those bacteria that undergo differentiation, in morphogenesis control. In Desulfatibacillum aliphaticivorans, this protein is GTPase Obg.